The following is a 725-amino-acid chain: Aminopeptidase RNPEPL1 (725 aa).

326–330 contributes to the substrate binding site; that stretch reads VAMEN. Position 353 (histidine 353) interacts with Zn(2+). Residue glutamate 354 is the Proton acceptor of the active site. 2 residues coordinate Zn(2+): histidine 357 and glutamate 376. Residues 676–699 are disordered; that stretch reads GLGSSTEPASEPSTELGKAEADTD. Positions 679–690 are enriched in low complexity; it reads SSTEPASEPSTE.

The protein belongs to the peptidase M1 family. It depends on Zn(2+) as a cofactor. Ubiquitously expressed. Expressed at relatively higher levels in heart and skeletal muscle.

It carries out the reaction Release of N-terminal amino acids, preferentially methionine, from peptides and arylamides.. Its activity is regulated as follows. Inhibited by calcium but not affected by chloride ions. Inhibited by amastatin and to a lower extent by bestatin. Weakly inhibited by puromycin. Its function is as follows. Broad specificity aminopeptidase which preferentially hydrolyzes an N-terminal methionine, citrulline or glutamine. This Homo sapiens (Human) protein is Aminopeptidase RNPEPL1.